Reading from the N-terminus, the 184-residue chain is Putative F-box protein At4g22420 (184 aa).

The region spanning 1-46 (MAECPTDLINEMFLRLRATTLKKCRVLSKPCFSLIDSPEKRVIERS) is the F-box domain. A disordered region spans residues 68 to 126 (DDDEEEGNELKKSQARRNGVAKGEGNGNKVNGEAQEEVDDEEDDDDDASKGRGKHSRHV). Residues 85 to 100 (NGVAKGEGNGNKVNGE) are compositionally biased toward low complexity. The span at 101-114 (AQEEVDDEEDDDDD) shows a compositional bias: acidic residues.

This is Putative F-box protein At4g22420 from Arabidopsis thaliana (Mouse-ear cress).